The primary structure comprises 476 residues: Aspartyl/glutamyl-tRNA(Asn/Gln) amidotransferase subunit B 1 (476 aa).

This sequence belongs to the GatB/GatE family. GatB subfamily. As to quaternary structure, heterotrimer of A, B and C subunits.

The catalysed reaction is L-glutamyl-tRNA(Gln) + L-glutamine + ATP + H2O = L-glutaminyl-tRNA(Gln) + L-glutamate + ADP + phosphate + H(+). It carries out the reaction L-aspartyl-tRNA(Asn) + L-glutamine + ATP + H2O = L-asparaginyl-tRNA(Asn) + L-glutamate + ADP + phosphate + 2 H(+). Its function is as follows. Allows the formation of correctly charged Asn-tRNA(Asn) or Gln-tRNA(Gln) through the transamidation of misacylated Asp-tRNA(Asn) or Glu-tRNA(Gln) in organisms which lack either or both of asparaginyl-tRNA or glutaminyl-tRNA synthetases. The reaction takes place in the presence of glutamine and ATP through an activated phospho-Asp-tRNA(Asn) or phospho-Glu-tRNA(Gln). The protein is Aspartyl/glutamyl-tRNA(Asn/Gln) amidotransferase subunit B 1 (gatB1) of Clostridium acetobutylicum (strain ATCC 824 / DSM 792 / JCM 1419 / IAM 19013 / LMG 5710 / NBRC 13948 / NRRL B-527 / VKM B-1787 / 2291 / W).